The sequence spans 438 residues: EF-hand calcium-binding domain-containing protein 3 (438 aa).

EF-hand domains lie at 47–82 (SQMA…LGMN) and 83–118 (LTKH…KNLF). Ca(2+) is bound by residues D96, D98, D100, K102, and D107. Y279 is subject to Phosphotyrosine. Over residues 405-415 (SSHNSRSSSSS) the composition is skewed to low complexity. Residues 405–438 (SSHNSRSSSSSDTSECYTDSGRKRKRKGLKGFQQ) are disordered. A compositionally biased stretch (basic residues) spans 426–438 (RKRKRKGLKGFQQ).

This Homo sapiens (Human) protein is EF-hand calcium-binding domain-containing protein 3 (EFCAB3).